The sequence spans 63 residues: Small integral membrane protein 43 (63 aa).

Important for interaction with SLC2A1 and SLC2A3 regions lie at residues 7–29 (LLLY…FVVI) and 51–57 (HREPWGF). A helical membrane pass occupies residues 9-29 (LYLALFFFLLFLLFLLLFVVI).

Interacts with glucose transporters SLC2A1/GLUT1 and SLC2A3/GLUT3; the interactions may promote SLC2A1- and SLC2A3-mediated glucose transport to meet the energy needs of mesendoderm differentiation. As to expression, accumulates in the posterior primitive streak of mid-gastrulation embryos at 7.0 dpc. In the adult, highly abundant and enriched in the brain compared to other organs.

It is found in the cell membrane. In terms of biological role, required for mesendoderm differentiation. Interacts with glucose transporters and promotes glucose uptake. Probably augments the glucose uptake capacity of glucose transporter proteins to meet the energy needs of mesendoderm differentiation. This chain is Small integral membrane protein 43, found in Mus musculus (Mouse).